Here is a 407-residue protein sequence, read N- to C-terminus: Phosphopentomutase (407 aa).

Mn(2+) is bound by residues Asp10, Asp306, His311, Asp347, His348, and His359.

Belongs to the phosphopentomutase family. Mn(2+) serves as cofactor.

Its subcellular location is the cytoplasm. It catalyses the reaction 2-deoxy-alpha-D-ribose 1-phosphate = 2-deoxy-D-ribose 5-phosphate. The enzyme catalyses alpha-D-ribose 1-phosphate = D-ribose 5-phosphate. Its pathway is carbohydrate degradation; 2-deoxy-D-ribose 1-phosphate degradation; D-glyceraldehyde 3-phosphate and acetaldehyde from 2-deoxy-alpha-D-ribose 1-phosphate: step 1/2. In terms of biological role, isomerase that catalyzes the conversion of deoxy-ribose 1-phosphate (dRib-1-P) and ribose 1-phosphate (Rib-1-P) to deoxy-ribose 5-phosphate (dRib-5-P) and ribose 5-phosphate (Rib-5-P), respectively. This chain is Phosphopentomutase, found in Edwardsiella ictaluri (strain 93-146).